We begin with the raw amino-acid sequence, 122 residues long: MSLLDTGARYQPVLVYPEELVIDADGNKKTQPSKTPIQAIARFQVANQSGTSARRAEQDNGGFTTEKVYRMRFPRSFTKEHGILGAQTQIEWKGQRWALFGDATEYDSSPALARVDYTIKRF.

The polypeptide is Gene 20 protein (20) (Mycobacterium phage D29 (Mycobacteriophage D29)).